The following is a 250-amino-acid chain: Tumor necrosis factor ligand superfamily member 13 (250 aa).

Positions 1–104 (MPASSPFLLA…ENGERSRKRR (104 aa)) are excised as a propeptide. 2 disordered regions span residues 61-82 (EVSRLQGTGGPSQNGEGYPWQS) and 89-108 (DALEAWENGERSRKRRAVLT). The THD domain maps to 116–250 (SVLHLVPINA…HGTFLGFVKL (135 aa)). Asn-124 carries an N-linked (GlcNAc...) asparagine glycan. The cysteines at positions 196 and 211 are disulfide-linked.

The protein belongs to the tumor necrosis factor family. As to quaternary structure, homotrimer. The precursor is cleaved by furin. Expressed at high levels in transformed cell lines, cancers of colon, thyroid, lymphoid tissues and specifically expressed in monocytes and macrophages.

It localises to the secreted. Cytokine that binds to TNFRSF13B/TACI and to TNFRSF17/BCMA. Plays a role in the regulation of tumor cell growth. May be involved in monocyte/macrophage-mediated immunological processes. This is Tumor necrosis factor ligand superfamily member 13 (TNFSF13) from Homo sapiens (Human).